A 287-amino-acid polypeptide reads, in one-letter code: Ribonuclease Z (287 aa).

His64, His66, Asp68, His69, His124, Asp191, and His250 together coordinate Zn(2+). The Proton acceptor role is filled by Asp68.

It belongs to the RNase Z family. As to quaternary structure, homodimer. Zn(2+) serves as cofactor.

It catalyses the reaction Endonucleolytic cleavage of RNA, removing extra 3' nucleotides from tRNA precursor, generating 3' termini of tRNAs. A 3'-hydroxy group is left at the tRNA terminus and a 5'-phosphoryl group is left at the trailer molecule.. Its function is as follows. Zinc phosphodiesterase, which displays some tRNA 3'-processing endonuclease activity. Probably involved in tRNA maturation, by removing a 3'-trailer from precursor tRNA. This Pyrobaculum calidifontis (strain DSM 21063 / JCM 11548 / VA1) protein is Ribonuclease Z.